An 871-amino-acid chain; its full sequence is Transient receptor potential cation channel subfamily V member 4 (871 aa).

Residues 1 to 68 (MADSSEGPRA…GPGDGRPNLR (68 aa)) are disordered. Over 1-469 (MADSSEGPRA…RDKWRKFGAV (469 aa)) the chain is Cytoplasmic. The residue at position 110 (Y110) is a Phosphotyrosine. Residues K192, K197, N201, 236–239 (YRGQ), and R248 each bind ATP. ANK repeat units follow at residues 237–266 (RGQT…DVHA) and 284–313 (FGEL…KKAD). Position 249-251 (249-251 (RCK)) interacts with a 1,2-diacyl-sn-glycero-3-phospho-(1D-myo-inositol-4,5-bisphosphate). Position 253 is a phosphotyrosine (Y253). A 1,2-diacyl-sn-glycero-3-phospho-(1D-myo-inositol-4,5-bisphosphate)-binding positions include 296–299 (NQPH) and K344. The ANK 3 repeat unit spans residues 369–398 (DGLSPLMMAAKTGKIGIFQHIIRREVTDED). Residues 470 to 490 (SFYINVVSYLCAMVIFTLTAY) form a helical membrane-spanning segment. The Extracellular portion of the chain corresponds to 491–507 (YQPLEGTPPYPYRTTVD). The chain crosses the membrane as a helical span at residues 508–534 (YLRLAGEVITLFTGVLFFFTNIKDLFM). Residues 535–547 (KKCPGVNSLFIDG) are Cytoplasmic-facing. Residues 548–568 (SFQLLYFIYSVLVIVSAALYL) form a helical membrane-spanning segment. Residues 569-572 (AGIE) are Extracellular-facing. A helical membrane pass occupies residues 573-593 (AYLAVMVFALVLGWMNALYFT). Residues 594 to 608 (RGLKLTGTYSIMIQK) lie on the Cytoplasmic side of the membrane. A helical transmembrane segment spans residues 609–636 (ILFKDLFRFLLVYLLFMIGYASALVSLL). Over 637–665 (NPCANMKVCNEDQTNCTVPTYPSCRDSET) the chain is Extracellular. Positions 666–685 (FSTFLLDLFKLTIGMGDLEM) form an intramembrane region, pore-forming. The short motif at 679–682 (GMGD) is the Selectivity filter element. D682 lines the Ca(2+) pocket. The Extracellular portion of the chain corresponds to 686 to 693 (LSSTKYPV). The helical transmembrane segment at 694-722 (VFIILLVTYIILTFVLLLNMLIALMGETV) threads the bilayer. Residues 723 to 871 (GQVSKESKHI…RKWRTDDAPL (149 aa)) are Cytoplasmic-facing. Y805 bears the Phosphotyrosine mark. The interaction with calmodulin and ITPR3 stretch occupies residues 812–831 (HTVGRLRRDRWSSVVPRVVE). S824 carries the post-translational modification Phosphoserine. The interval 849–871 (GNPRCDGHQQGYPRKWRTDDAPL) is disordered.

The protein belongs to the transient receptor (TC 1.A.4) family. TrpV subfamily. TRPV4 sub-subfamily. As to quaternary structure, homotetramer. Self-associates in an isoform-specific manner. Isoform 1 and isoform 5 can oligomerize, but isoform 2, isoform 4 and isoform 6 cannot oligomerize. Interacts with calmodulin. Interacts with Map7 and Src family Tyr protein kinases LYN, SRC, FYN, HCK, LCK and YES. Interacts with CTNNB1. The TRPV4 and CTNNB1 complex can interact with CDH1. Interacts with PACSIN1, PACSIN2 and PACSIN3 (via SH3 domain). Part of a complex containing MLC1, AQP4, HEPACAM and ATP1B1. Interacts with ITPR3. Interacts with AQP5; the interaction is probably indirect and regulates TRPV4 activation by hypotonicity. Interacts with ANO1. Interacts (via C-terminus) with PKD2 (via C-terminus). Interacts with DDX3X; this interaction is decreased when the channel is activated. N-glycosylated. In terms of tissue distribution, found in the synoviocytes from patients with (RA) and without (CTR) rheumatoid arthritis (at protein level).

The protein localises to the cell membrane. It localises to the apical cell membrane. The protein resides in the cell junction. It is found in the adherens junction. Its subcellular location is the cell projection. The protein localises to the cilium. It localises to the endoplasmic reticulum. The catalysed reaction is Ca(2+)(in) = Ca(2+)(out). Its activity is regulated as follows. Channel activation is inhibited by binding to phosphatidylinositol-4,5-bisphosphate, and to a much lesser degree by phosphatidylinositol-3,4,5-trisphosphate. Not inhibited by phosphatidylinositol-3,4-bisphosphate and phosphatidylinositol-3,5-bisphosphate. Its function is as follows. Non-selective calcium permeant cation channel involved in osmotic sensitivity and mechanosensitivity. Activation by exposure to hypotonicity within the physiological range exhibits an outward rectification. Also activated by heat, low pH, citrate and phorbol esters. Increase of intracellular Ca(2+) potentiates currents. Channel activity seems to be regulated by a calmodulin-dependent mechanism with a negative feedback mechanism. Promotes cell-cell junction formation in skin keratinocytes and plays an important role in the formation and/or maintenance of functional intercellular barriers. Acts as a regulator of intracellular Ca(2+) in synoviocytes. Plays an obligatory role as a molecular component in the nonselective cation channel activation induced by 4-alpha-phorbol 12,13-didecanoate and hypotonic stimulation in synoviocytes and also regulates production of IL-8. Together with PKD2, forms mechano- and thermosensitive channels in cilium. Negatively regulates expression of PPARGC1A, UCP1, oxidative metabolism and respiration in adipocytes. Regulates expression of chemokines and cytokines related to pro-inflammatory pathway in adipocytes. Together with AQP5, controls regulatory volume decrease in salivary epithelial cells. Required for normal development and maintenance of bone and cartilage. In its inactive state, may sequester DDX3X at the plasma membrane. When activated, the interaction between both proteins is affected and DDX3X relocalizes to the nucleus. In neurons of the central nervous system, could play a role in triggering voluntary water intake in response to increased sodium concentration in body fluid. Functionally, non-selective calcium permeant cation channel involved in osmotic sensitivity and mechanosensitivity. Activation by exposure to hypotonicity within the physiological range exhibits an outward rectification. Also activated by phorbol esters. Has the same channel activity as isoform 1, and is activated by the same stimuli. Lacks channel activity, due to impaired oligomerization and intracellular retention. In terms of biological role, (Microbial infection) Facilitates hepatitis C virus (HCV) replication, possibly through its action on DDX3X. Its function is as follows. (Microbial infection) Facilitates Dengue virus (DENV) replication, possibly through its action on DDX3X. Functionally, (Microbial infection) Facilitates Zika virus (ZIKV) replication, possibly through its action on DDX3X. The protein is Transient receptor potential cation channel subfamily V member 4 (TRPV4) of Homo sapiens (Human).